The chain runs to 619 residues: ATP-dependent DNA helicase RecQ (619 aa).

A Helicase ATP-binding domain is found at 37-205 (INAALNGQDA…LRHLNLKNLH (169 aa)). 50–57 (MATGNGKS) contributes to the ATP binding site. The short motif at 149 to 152 (DEAH) is the DEAH box element. Positions 229–374 (QLTRFVLAQK…QIEQHKLEAI (146 aa)) constitute a Helicase C-terminal domain. Zn(2+) contacts are provided by Cys-383, Cys-400, Cys-403, and Cys-406. Positions 535–615 (ANYDKDLFAR…QEHKAILANA (81 aa)) constitute an HRDC domain.

Belongs to the helicase family. RecQ subfamily. Mg(2+) is required as a cofactor. Requires Zn(2+) as cofactor.

It catalyses the reaction Couples ATP hydrolysis with the unwinding of duplex DNA by translocating in the 3'-5' direction.. The catalysed reaction is ATP + H2O = ADP + phosphate + H(+). In terms of biological role, an ATP-dependent DNA helicase which unwinds DNA in a 3'-5' direction. Plays a role in recombination. The polypeptide is ATP-dependent DNA helicase RecQ (Haemophilus influenzae (strain ATCC 51907 / DSM 11121 / KW20 / Rd)).